A 223-amino-acid chain; its full sequence is N-terminal Xaa-Pro-Lys N-methyltransferase 1 (223 aa).

Met-1 is subject to N-acetylmethionine. Thr-2 carries the N-acetylthreonine; in N-terminal Xaa-Pro-Lys N-methyltransferase 1, N-terminally processed modification. S-adenosyl-L-methionine is bound by residues Gly-69, Arg-74, 91–93 (DVT), 119–120 (LQ), and Gln-135.

The protein belongs to the methyltransferase superfamily. NTM1 family.

Its subcellular location is the nucleus. It catalyses the reaction N-terminal L-alanyl-L-prolyl-L-lysyl-[protein] + 3 S-adenosyl-L-methionine = N-terminal N,N,N-trimethyl-L-alanyl-L-prolyl-L-lysyl-[protein] + 3 S-adenosyl-L-homocysteine + 3 H(+). It carries out the reaction N-terminal L-seryl-L-prolyl-L-lysyl-[protein] + 3 S-adenosyl-L-methionine = N-terminal N,N,N-trimethyl-L-seryl-L-prolyl-L-lysyl-[protein] + 3 S-adenosyl-L-homocysteine + 3 H(+). The enzyme catalyses N-terminal L-prolyl-L-prolyl-L-lysyl-[protein] + 2 S-adenosyl-L-methionine = N-terminal N,N-dimethyl-L-prolyl-L-prolyl-L-lysyl-[protein] + 2 S-adenosyl-L-homocysteine + 2 H(+). In terms of biological role, distributive alpha-N-methyltransferase that methylates the N-terminus of target proteins containing the N-terminal motif [Ala/Gly/Pro/Ser]-Pro-Lys when the initiator Met is cleaved. Specifically catalyzes mono-, di- or tri-methylation of the exposed alpha-amino group of the Ala, Gly or Ser residue in the [Ala/Gly/Ser]-Pro-Lys motif and mono- or di-methylation of Pro in the Pro-Pro-Lys motif. Some of the substrates may be primed by NTMT2-mediated monomethylation. Catalyzes the trimethylation of the N-terminal Gly in CENPA (after removal of Met-1). Responsible for the N-terminal methylation of KLHL31, MYL2, MYL3, RB1, RCC1, RPL23A and SET. Required during mitosis for normal bipolar spindle formation and chromosome segregation via its action on RCC1. The sequence is that of N-terminal Xaa-Pro-Lys N-methyltransferase 1 (NTMT1) from Bos taurus (Bovine).